We begin with the raw amino-acid sequence, 188 residues long: dCTP deaminase (188 aa).

DCTP-binding positions include 111–116 (KSTYAR), 135–137 (TLE), glutamine 156, tyrosine 170, and glutamine 180. Glutamate 137 acts as the Proton donor/acceptor in catalysis.

The protein belongs to the dCTP deaminase family. Homotrimer.

The catalysed reaction is dCTP + H2O + H(+) = dUTP + NH4(+). The protein operates within pyrimidine metabolism; dUMP biosynthesis; dUMP from dCTP (dUTP route): step 1/2. In terms of biological role, catalyzes the deamination of dCTP to dUTP. The sequence is that of dCTP deaminase from Nitrosococcus oceani (strain ATCC 19707 / BCRC 17464 / JCM 30415 / NCIMB 11848 / C-107).